The primary structure comprises 62 residues: uncharacterized protein (62 aa).

The segment at 1 to 62 is disordered; the sequence is MSSTAEEMAA…SNGEAKRKEK (62 aa). A compositionally biased stretch (basic and acidic residues) spans 28–37; it reads TKSDRVEHKH.

This is an uncharacterized protein from Caenorhabditis elegans.